The primary structure comprises 201 residues: Superoxide dismutase [Fe] (201 aa).

Fe cation is bound by residues H27, H79, D161, and H165.

It belongs to the iron/manganese superoxide dismutase family. As to quaternary structure, homodimer. Requires Fe cation as cofactor.

It catalyses the reaction 2 superoxide + 2 H(+) = H2O2 + O2. Its function is as follows. Destroys superoxide anion radicals which are normally produced within the cells and which are toxic to biological systems. This Synechococcus elongatus (strain ATCC 33912 / PCC 7942 / FACHB-805) (Anacystis nidulans R2) protein is Superoxide dismutase [Fe] (sodB).